A 169-amino-acid polypeptide reads, in one-letter code: Cytochrome c-type biogenesis protein CcmE (169 aa).

Residues 1–7 (MTRKQRR) are Cytoplasmic-facing. A helical; Signal-anchor for type II membrane protein transmembrane segment spans residues 8–28 (MTIIGGSLAVLALAAALVLNA). Topologically, residues 29–169 (LRDSIVFFST…AQGNPQGAVR (141 aa)) are periplasmic. Heme contacts are provided by His122 and Tyr126. Residues 143–169 (DDYGGKASDGVKPAATTAQGNPQGAVR) form a disordered region. A compositionally biased stretch (polar residues) spans 158–169 (TTAQGNPQGAVR).

This sequence belongs to the CcmE/CycJ family.

It localises to the cell inner membrane. In terms of biological role, heme chaperone required for the biogenesis of c-type cytochromes. Transiently binds heme delivered by CcmC and transfers the heme to apo-cytochromes in a process facilitated by CcmF and CcmH. The sequence is that of Cytochrome c-type biogenesis protein CcmE from Bradyrhizobium diazoefficiens (strain JCM 10833 / BCRC 13528 / IAM 13628 / NBRC 14792 / USDA 110).